Here is a 92-residue protein sequence, read N- to C-terminus: Putative septation protein SpoVG (92 aa).

It belongs to the SpoVG family.

Could be involved in septation. This chain is Putative septation protein SpoVG, found in Thermoanaerobacter pseudethanolicus (strain ATCC 33223 / 39E) (Clostridium thermohydrosulfuricum).